The chain runs to 154 residues: UPF0225 protein Asuc_0343 (154 aa).

It belongs to the UPF0225 family.

This is UPF0225 protein Asuc_0343 from Actinobacillus succinogenes (strain ATCC 55618 / DSM 22257 / CCUG 43843 / 130Z).